Here is a 927-residue protein sequence, read N- to C-terminus: Isoleucine--tRNA ligase (927 aa).

The short motif at 57–67 is the 'HIGH' region element; sequence PYANGHIHIGH. Residue Glu-561 coordinates L-isoleucyl-5'-AMP. Residues 602–606 carry the 'KMSKS' region motif; that stretch reads KMSKS. ATP is bound at residue Lys-605. 4 residues coordinate Zn(2+): Cys-897, Cys-900, Cys-917, and Cys-920.

The protein belongs to the class-I aminoacyl-tRNA synthetase family. IleS type 1 subfamily. As to quaternary structure, monomer. It depends on Zn(2+) as a cofactor.

It is found in the cytoplasm. It carries out the reaction tRNA(Ile) + L-isoleucine + ATP = L-isoleucyl-tRNA(Ile) + AMP + diphosphate. In terms of biological role, catalyzes the attachment of isoleucine to tRNA(Ile). As IleRS can inadvertently accommodate and process structurally similar amino acids such as valine, to avoid such errors it has two additional distinct tRNA(Ile)-dependent editing activities. One activity is designated as 'pretransfer' editing and involves the hydrolysis of activated Val-AMP. The other activity is designated 'posttransfer' editing and involves deacylation of mischarged Val-tRNA(Ile). The protein is Isoleucine--tRNA ligase of Syntrophotalea carbinolica (strain DSM 2380 / NBRC 103641 / GraBd1) (Pelobacter carbinolicus).